The chain runs to 138 residues: Putative thioredoxin-like protein 453L (138 aa).

In terms of domain architecture, Thioredoxin spans 3 to 138 (QQKYFEKPVY…FNNIVNYVMG (136 aa)). Active-site nucleophile residues include Cys-44 and Cys-47. A disulfide bridge links Cys-44 with Cys-47.

It belongs to the thioredoxin family.

Its function is as follows. Participates in various redox reactions through the reversible oxidation of its active center dithiol to a disulfide and catalyzes dithiol-disulfide exchange reactions. This Acheta domesticus (House cricket) protein is Putative thioredoxin-like protein 453L.